A 54-amino-acid chain; its full sequence is MSKSKKKAETIFLVCEETGQYNYTLRKKPGGEKLRLKKYNPNLRKHTWHAEKKK.

This sequence belongs to the bacterial ribosomal protein bL33 family.

In Rhodopirellula baltica (strain DSM 10527 / NCIMB 13988 / SH1), this protein is Large ribosomal subunit protein bL33.